Reading from the N-terminus, the 255-residue chain is Protein DOG1-like 2 (255 aa).

In terms of domain architecture, DOG1 spans 10 to 246; that stretch reads EKLQKRCYHE…HDRGRVRADV (237 aa).

In Arabidopsis thaliana (Mouse-ear cress), this protein is Protein DOG1-like 2.